The chain runs to 110 residues: Class I hydrophobin 2 (110 aa).

Positions Met-1–Ala-19 are cleaved as a signal peptide. Cystine bridges form between Cys-29-Cys-89, Cys-36-Cys-83, Cys-37-Cys-70, and Cys-90-Cys-103.

This sequence belongs to the fungal hydrophobin family. In terms of assembly, self-assembles to form functional amyloid fibrils called rodlets. Self-assembly into fibrillar rodlets occurs spontaneously at hydrophobic:hydrophilic interfaces and the rodlets further associate laterally to form amphipathic monolayers.

It is found in the secreted. It localises to the cell wall. In terms of biological role, aerial growth, conidiation, and dispersal of filamentous fungi in the environment rely upon a capability of their secreting small amphipathic proteins called hydrophobins (HPBs) with low sequence identity. Class I can self-assemble into an outermost layer of rodlet bundles on aerial cell surfaces, conferring cellular hydrophobicity that supports fungal growth, development and dispersal; whereas Class II form highly ordered films at water-air interfaces through intermolecular interactions but contribute nothing to the rodlet structure. Pnh2 is a class I hydrophobin that might be involved in the attachment of the hydrophilic wall of hyphae to the hydrophobic surface of wood under inorganic phosphate (Pi)-deficient conditions and enable the mycelium to degrade efficiently the components of wood and to acquire nutrients containing Pi. The polypeptide is Class I hydrophobin 2 (Pholiota nameko).